The chain runs to 568 residues: MSDSDLKEIEKNAENIKLEPAEDEVNEEDQNEITIPELPEGRVLELRLLSNWGDSHYIGLNSVEIFTSTGERAVIDKVTTNVTEYTGSLESLIVQRVHCKDAEKMWCAKTTEEKIVLTLELKETCKLALIRFWNYNASRVHAQIGVRYLEMYLDGVGIFRGELECAFSADSEFTPVMGETVLFTTSDNILELIALHDVCLISLPEEPISNSSIEMLKADHLTPYRPSTCEAKDAPSTPVTIVPPPIFRQTGTAYKHDVKTLHIELLSNWGMDGLIGLTGLELVDEHSQLIDESQYTVTTSDGNSDLSKKLFNGRNLTRDPHDMWLVDFDSKNFTTISITFHDNVALKAISVWNYNASFELSYAGVKAAKIYINGKLIKNVLLRKATGFVYFDYVQDVVLDPNNTERDFVPKGISQSIGGFVFQIRLLSTWGDEFYIGLNGIELYNRKGELMKIREHNLAAFPESVNILPNIKNDLRTSNNLITQPNDTDIARNMWLTALLPNRCARVFFVFDVQTYISKIVIYNYRKTPERGVRHISVTVDDLIIFSGEIPSSTATLTGNLEINLMDI.

The segment covering 1–20 (MSDSDLKEIEKNAENIKLEP) has biased composition (basic and acidic residues). The disordered stretch occupies residues 1–30 (MSDSDLKEIEKNAENIKLEPAEDEVNEEDQ). Residues 21-30 (AEDEVNEEDQ) are compositionally biased toward acidic residues.

As to expression, expressed in most ciliated neuronal cells. Not expressed in non-ciliated cells.

It is found in the cytoplasm. Its subcellular location is the cytoskeleton. The protein resides in the cilium axoneme. It localises to the cilium basal body. Its function is as follows. May regulate ciliary A-tubule number and, along with arl-13, controls cilium integrity. This chain is Protein KATNIP homolog, found in Caenorhabditis elegans.